The primary structure comprises 224 residues: Aminopyrimidine aminohydrolase (224 aa).

Aspartate 44 is a substrate binding site. Cysteine 135 acts as the Nucleophile in catalysis. Tyrosine 139 and tyrosine 165 together coordinate substrate. Glutamate 207 functions as the Proton donor in the catalytic mechanism.

The protein belongs to the TenA family. In terms of assembly, homotetramer.

The enzyme catalyses 4-amino-5-aminomethyl-2-methylpyrimidine + H2O = 4-amino-5-hydroxymethyl-2-methylpyrimidine + NH4(+). It carries out the reaction thiamine + H2O = 5-(2-hydroxyethyl)-4-methylthiazole + 4-amino-5-hydroxymethyl-2-methylpyrimidine + H(+). It functions in the pathway cofactor biosynthesis; thiamine diphosphate biosynthesis. In terms of biological role, catalyzes an amino-pyrimidine hydrolysis reaction at the C5' of the pyrimidine moiety of thiamine compounds, a reaction that is part of a thiamine salvage pathway. Thus, catalyzes the conversion of 4-amino-5-aminomethyl-2-methylpyrimidine to 4-amino-5-hydroxymethyl-2-methylpyrimidine (HMP). To a lesser extent, is also able to catalyze the hydrolytic cleavage of thiamine; however, this thiaminase activity is unlikely to be physiologically relevant. Therefore, is involved in the regeneration of the thiamine pyrimidine from thiamine degraded products present in the environment, rather than in thiamine degradation. The protein is Aminopyrimidine aminohydrolase of Halalkalibacterium halodurans (strain ATCC BAA-125 / DSM 18197 / FERM 7344 / JCM 9153 / C-125) (Bacillus halodurans).